Reading from the N-terminus, the 294-residue chain is Ferredoxin--NADP reductase (294 aa).

Residues 13–137 enclose the FAD-binding FR-type domain; that stretch reads KNPYIGKCLS…TGPVGKEMLL (125 aa). Residues 72 to 75, 93 to 95, tyrosine 99, 111 to 113, and threonine 152 contribute to the FAD site; these read RLYS, CVR, and VCS. Residues serine 75 and arginine 95 each contribute to the NADP(+) site. Residues threonine 152, 184–185, 214–215, lysine 224, 224–228, 253–254, and glutamate 292 contribute to the NADP(+) site; these read IP, SR, KMYIQ, and GL.

The protein belongs to the ferredoxin--NADP reductase type 1 family. FAD is required as a cofactor.

It localises to the cellular thylakoid membrane. It carries out the reaction 2 reduced [2Fe-2S]-[ferredoxin] + NADP(+) + H(+) = 2 oxidized [2Fe-2S]-[ferredoxin] + NADPH. The sequence is that of Ferredoxin--NADP reductase (petH) from Spirulina sp.